The chain runs to 32 residues: Delta-conotoxin EVIA (32 aa).

3 disulfide bridges follow: cysteine 3–cysteine 21, cysteine 10–cysteine 25, and cysteine 20–cysteine 29. The residue at position 6 (proline 6) is a 4-hydroxyproline. Leucine 32 is subject to Leucine amide.

This sequence belongs to the conotoxin O1 superfamily. As to expression, expressed by the venom duct.

It is found in the secreted. In terms of biological role, delta-conotoxins bind to site 6 of voltage-gated sodium channels and inhibit the inactivation process. This toxin inhibits sodium channel inactivation in neuronal membranes from amphibians and mammals (Nav1.2a/SCN1A, Nav1.3/SCN3A and Nav1.6/SCN8A) upon binding to receptor site 6. The polypeptide is Delta-conotoxin EVIA (Conus ermineus (Agate cone)).